Consider the following 408-residue polypeptide: Glucose-1-phosphate adenylyltransferase (408 aa).

Alpha-D-glucose 1-phosphate contacts are provided by residues tyrosine 100, glycine 165, 180–181 (EK), and serine 198.

This sequence belongs to the bacterial/plant glucose-1-phosphate adenylyltransferase family. As to quaternary structure, homotetramer.

The catalysed reaction is alpha-D-glucose 1-phosphate + ATP + H(+) = ADP-alpha-D-glucose + diphosphate. It participates in glycan biosynthesis; glycogen biosynthesis. Functionally, involved in the biosynthesis of ADP-glucose, a building block required for the elongation reactions to produce glycogen. Catalyzes the reaction between ATP and alpha-D-glucose 1-phosphate (G1P) to produce pyrophosphate and ADP-Glc. The chain is Glucose-1-phosphate adenylyltransferase from Cutibacterium acnes (strain DSM 16379 / KPA171202) (Propionibacterium acnes).